Here is a 178-residue protein sequence, read N- to C-terminus: MFRHIFTLGPRSISAITVRSRRALSSTAKPVSAPVTSDDRPNLDVKHLKHPTKVPQQPHKSDIDRRQEPVPRISVDDQTVQLLERLSLVDLDSKEAHRTLEDSIEFASRILAIDTDGVEPLYTVLEKQKLALREDVVSDGNLQEDVLSNARITEEEYFVAPPGNIPLEQDSSGNKHKQ.

The N-terminal 31 residues, 1–31, are a transit peptide targeting the mitochondrion; that stretch reads MFRHIFTLGPRSISAITVRSRRALSSTAKPV. A disordered region spans residues 26–67; that stretch reads STAKPVSAPVTSDDRPNLDVKHLKHPTKVPQQPHKSDIDRRQ. Positions 37–46 are enriched in basic and acidic residues; the sequence is SDDRPNLDVK.

This sequence belongs to the GatC family. Subunit of the heterotrimeric GatCAB amidotransferase (AdT) complex, composed of A, B and C subunits.

It localises to the mitochondrion. It catalyses the reaction L-glutamyl-tRNA(Gln) + L-glutamine + ATP + H2O = L-glutaminyl-tRNA(Gln) + L-glutamate + ADP + phosphate + H(+). Its function is as follows. Allows the formation of correctly charged Gln-tRNA(Gln) through the transamidation of misacylated Glu-tRNA(Gln) in the mitochondria. The reaction takes place in the presence of glutamine and ATP through an activated gamma-phospho-Glu-tRNA(Gln). This chain is Glutamyl-tRNA(Gln) amidotransferase subunit C, mitochondrial, found in Aedes aegypti (Yellowfever mosquito).